A 398-amino-acid polypeptide reads, in one-letter code: Acetate kinase (398 aa).

N8 provides a ligand contact to Mg(2+). K15 provides a ligand contact to ATP. R92 provides a ligand contact to substrate. The active-site Proton donor/acceptor is D149. ATP contacts are provided by residues H209 to G213, D283 to R285, and G331 to N335. E385 contacts Mg(2+).

Belongs to the acetokinase family. As to quaternary structure, homodimer. Mg(2+) serves as cofactor. Requires Mn(2+) as cofactor.

Its subcellular location is the cytoplasm. The enzyme catalyses acetate + ATP = acetyl phosphate + ADP. It functions in the pathway metabolic intermediate biosynthesis; acetyl-CoA biosynthesis; acetyl-CoA from acetate: step 1/2. Catalyzes the formation of acetyl phosphate from acetate and ATP. Can also catalyze the reverse reaction. This chain is Acetate kinase, found in Corynebacterium efficiens (strain DSM 44549 / YS-314 / AJ 12310 / JCM 11189 / NBRC 100395).